The primary structure comprises 203 residues: Ribosomal RNA small subunit methyltransferase G (203 aa).

S-adenosyl-L-methionine is bound by residues Gly73, Leu78, 124–125 (VE), and Arg138.

This sequence belongs to the methyltransferase superfamily. RNA methyltransferase RsmG family.

Its subcellular location is the cytoplasm. It carries out the reaction guanosine(527) in 16S rRNA + S-adenosyl-L-methionine = N(7)-methylguanosine(527) in 16S rRNA + S-adenosyl-L-homocysteine. Its function is as follows. Specifically methylates the N7 position of guanine in position 527 of 16S rRNA. The protein is Ribosomal RNA small subunit methyltransferase G of Glaesserella parasuis serovar 5 (strain SH0165) (Haemophilus parasuis).